Here is a 534-residue protein sequence, read N- to C-terminus: Kelch repeat and BTB domain-containing protein 4 (534 aa).

The 68-residue stretch at 61-128 (ADVTISVEGR…IYHGTVKLRA (68 aa)) folds into the BTB domain. The region spanning 163 to 255 (CLQVMWLADR…SLKEIGENVH (93 aa)) is the BACK domain. Kelch repeat units lie at residues 255-301 (HIYL…KHGG), 302-344 (DLYV…SVPG), 347-394 (AIYS…NLNG), 396-446 (IYLL…VHKD), and 448-497 (VFIV…VFRD).

In terms of assembly, component of the BCR(KBTBD4) E3 ubiquitin ligase complex, at least composed of CUL3, KBTBD4 and RBX1.

Functionally, substrate-specific adapter of a BCR (BTB-CUL3-RBX1) E3 ubiquitin ligase complex which targets CoREST corepressor complex components RCOR1, KDM1A/LSD1 and HDAC2 for proteasomal degradation. RCOR1 is likely to be the primary target while degradation of KDM1A and HDAC2 is likely due to their association with RCOR1. Also targets RCOR3, MIER2 and MIER3 for proteasomal degradation as well as associated proteins ZNF217 and RREB1. Degradation is dependent on the presence of an ELM2 domain in the target proteins. The sequence is that of Kelch repeat and BTB domain-containing protein 4 (Kbtbd4) from Mus musculus (Mouse).